A 270-amino-acid chain; its full sequence is 4-hydroxy-tetrahydrodipicolinate reductase (270 aa).

NAD(+) is bound by residues 8 to 13 and E34; that span reads GAAGRM. An NADP(+)-binding site is contributed by R35. NAD(+) contacts are provided by residues 98–100 and 122–125; these read GST and SPNM. The active-site Proton donor/acceptor is H155. Residue H156 participates in (S)-2,3,4,5-tetrahydrodipicolinate binding. The active-site Proton donor is the K159. A (S)-2,3,4,5-tetrahydrodipicolinate-binding site is contributed by 165-166; sequence GT.

Belongs to the DapB family.

Its subcellular location is the cytoplasm. The enzyme catalyses (S)-2,3,4,5-tetrahydrodipicolinate + NAD(+) + H2O = (2S,4S)-4-hydroxy-2,3,4,5-tetrahydrodipicolinate + NADH + H(+). It catalyses the reaction (S)-2,3,4,5-tetrahydrodipicolinate + NADP(+) + H2O = (2S,4S)-4-hydroxy-2,3,4,5-tetrahydrodipicolinate + NADPH + H(+). It functions in the pathway amino-acid biosynthesis; L-lysine biosynthesis via DAP pathway; (S)-tetrahydrodipicolinate from L-aspartate: step 4/4. In terms of biological role, catalyzes the conversion of 4-hydroxy-tetrahydrodipicolinate (HTPA) to tetrahydrodipicolinate. This is 4-hydroxy-tetrahydrodipicolinate reductase from Anaeromyxobacter dehalogenans (strain 2CP-1 / ATCC BAA-258).